The primary structure comprises 153 residues: MRSKQWHLSTQDANLANKKYDYIYFRGVNQLYLKRLKKSSNKFFVYKKCKIVPRMISKHLNNDHLINVNDYVPLTKEFIKKSVEKEVKHYLRFISYENKTKQMPELINFLEKSLEDKLFIVAKDYDPLFSVFLRYYIQSLIEKYINELWINEW.

This is an uncharacterized protein from Ureaplasma parvum serovar 3 (strain ATCC 700970).